Here is a 464-residue protein sequence, read N- to C-terminus: Sushi repeat-containing protein SRPX (464 aa).

Residues 1 to 28 (MGSPGLRPTLLLPQVLLLLLALLHVPPS) form the signal peptide. Residue S34 is glycosylated (O-linked (Xyl...) (chondroitin sulfate) serine). 5 cysteine pairs are disulfide-bonded: C57–C85, C69–C103, C89–C115, C120–C161, and C147–C174. Sushi domains are found at residues 57–117 (CSPI…ICKQ) and 118–176 (KRCP…SCVD). The HYR domain maps to 177–259 (MEPPRIKCPS…TCKFRVKVRV (83 aa)). In terms of domain architecture, Sushi 3 spans 260–319 (RRCGKLNAPENGYMKCSSDGDNYGATCEFSCIGGYELQGSPARVCQSNLAWSGTEPSCAA). Intrachain disulfides connect C262–C304 and C290–C317.

As to expression, normal cells and cells transformed by human papillomavirus type 16 E6E7 and polyomavirus large T. Suppressed in cells transformed by oncogenes such as V-SRC, V-ABL, V-FPS, V-MOS, V-SIS, V-K-RAS, and polyomavirus middle T.

The polypeptide is Sushi repeat-containing protein SRPX (Srpx) (Rattus norvegicus (Rat)).